The primary structure comprises 507 residues: Maturase K (507 aa).

This sequence belongs to the intron maturase 2 family. MatK subfamily.

It is found in the plastid. The protein localises to the chloroplast. Functionally, usually encoded in the trnK tRNA gene intron. Probably assists in splicing its own and other chloroplast group II introns. The protein is Maturase K of Cryptomeria japonica (Japanese cedar).